The following is a 206-amino-acid chain: Probable N-acetyltransferase 14 (206 aa).

An N-acetyltransferase domain is found at 6–206; the sequence is LSVREMREDE…TLVREFSKDL (201 aa). The helical transmembrane segment at 57-77 threads the bilayer; it reads FVLASFALALLLPVFLAVAAV.

It belongs to the camello family. In terms of tissue distribution, expressed in K-562 and HeLa cell lines and in brain.

The protein resides in the membrane. Functionally, probable acetyltransferase. May act as a transcription factor that regulates the expression of coproporphyrinogen oxidase by binding to a promoter regulatory element. This is Probable N-acetyltransferase 14 (NAT14) from Homo sapiens (Human).